The following is a 109-amino-acid chain: Class I hydrophobin 7 (109 aa).

The N-terminal stretch at 1 to 17 (MFAQSFIITALAALAVA) is a signal peptide. 4 disulfides stabilise this stretch: Cys28-Cys88, Cys35-Cys82, Cys36-Cys69, and Cys89-Cys102.

This sequence belongs to the fungal hydrophobin family. Self-assembles to form functional amyloid fibrils called rodlets. Self-assembly into fibrillar rodlets occurs spontaneously at hydrophobic:hydrophilic interfaces and the rodlets further associate laterally to form amphipathic monolayers.

Its subcellular location is the secreted. The protein localises to the cell wall. Its function is as follows. Aerial growth, conidiation, and dispersal of filamentous fungi in the environment rely upon a capability of their secreting small amphipathic proteins called hydrophobins (HPBs) with low sequence identity. Class I can self-assemble into an outermost layer of rodlet bundles on aerial cell surfaces, conferring cellular hydrophobicity that supports fungal growth, development and dispersal; whereas Class II form highly ordered films at water-air interfaces through intermolecular interactions but contribute nothing to the rodlet structure. Hydph7 is a class I hydrophobin involved in fruiting body development. The sequence is that of Class I hydrophobin 7 from Pleurotus ostreatus (strain PC15) (Oyster mushroom).